A 124-amino-acid polypeptide reads, in one-letter code: Anamorsin homolog (124 aa).

Residues 1-20 show a composition bias toward polar residues; the sequence is MSSPAPSTSHNAANSTQAFS. Disordered stretches follow at residues 1-39 and 40-124; these read MSSP…EDRE and AKST…TDDI. 4 residues coordinate [2Fe-2S] cluster: Cys49, Cys56, Cys59, and Cys61. The fe-S binding site A stretch occupies residues 49-61; it reads CATRRRACKNCTC. Positions 86, 89, 97, and 100 each coordinate [4Fe-4S] cluster. Short sequence motifs (cx2C motif) lie at residues 86-89 and 97-100; these read CGNC and CAGC. The tract at residues 86-100 is fe-S binding site B; that stretch reads CGNCAKGDAFRCAGC.

It belongs to the anamorsin family. Monomer. Requires [2Fe-2S] cluster as cofactor. The cofactor is [4Fe-4S] cluster.

The protein localises to the cytoplasm. It localises to the mitochondrion intermembrane space. Its function is as follows. Component of the cytosolic iron-sulfur (Fe-S) protein assembly (CIA) machinery. Required for the maturation of extramitochondrial Fe-S proteins. Part of an electron transfer chain functioning in an early step of cytosolic Fe-S biogenesis, facilitating the de novo assembly of a [4Fe-4S] cluster on the cytosolic Fe-S scaffold complex. Electrons are transferred from NADPH via a FAD- and FMN-containing diflavin oxidoreductase. Together with the diflavin oxidoreductase, also required for the assembly of the diferric tyrosyl radical cofactor of ribonucleotide reductase (RNR), probably by providing electrons for reduction during radical cofactor maturation in the catalytic small subunit. The protein is Anamorsin homolog of Trypanosoma brucei brucei (strain 927/4 GUTat10.1).